Consider the following 778-residue polypeptide: MNKKSLPLMALRDMVVFPGVIAPIFVGRQKSLQALSHTTVSEEDNSKYILVTLQKKFDQENPSKHELNNTAILAKIIQIVKLPNNTAKILIEAVARVKLSNIKGNDAFEANYEIIPDEEIFDVNNMRSLVDNAVQLFSKYAINDKKVNAEIIETINKEISNSTNFINIINILASHLITSLEAKQHLLEETSPFKRITTVISTLTSNIVNSETEQALQQRVRKQIEKTQRDYYLHEQMKAIQKELDEDKSELADIEKKIKSLKLSKEAKEKAESELKKLRSMNQMSAESGVTRNYLETLLSLPWGKYDNSKIDINQAEKILNRDHFGLEKVKERIIEYLAVLQRSSKIRGPILCLIGPPGVGKTSLVKSIAEGMGRKYTKFALGGVRDEAEIRGHRKTYLGSTPGKILGQLKKVKTSNPVMLLDEIDKMSSDFRGDPASALLEVLDPEQNSHFVDHYLEVEYDLSNVIFIATANSHDLPRALSDRMEKIYISGYVEEEKLQIAKNYLVPKQFKMHKIKKDEITISETAILDLIRYYTKESGVRALEREIGALTRKALKQILADKTVKHIAIDSSNLEEFLEAKKYNFGLAEKEDQIGSTTGLAYTEVGGELLTIEALAFPGKGEIKTTGKLGDVMKESAMAAYSCFRSRATNFGLKYDNYKDFDIHIHVPAGAIPKDGPSAGCALFTTIVSLMTKIPVHRTVAMTGEITLRGNVLPIGGLKEKLLAASRGGIKTVLIPEENVKDLKDIPPNIKESLEIISVSNIDQVLKHALVETPINK.

The Lon N-terminal domain maps to 6–207; the sequence is LPLMALRDMV…TVISTLTSNI (202 aa). Residue 356–363 participates in ATP binding; sequence GPPGVGKT. One can recognise a Lon proteolytic domain in the interval 592-773; the sequence is EDQIGSTTGL…DQVLKHALVE (182 aa). Catalysis depends on residues Ser679 and Lys722.

Belongs to the peptidase S16 family. In terms of assembly, homohexamer. Organized in a ring with a central cavity.

The protein resides in the cytoplasm. It carries out the reaction Hydrolysis of proteins in presence of ATP.. Functionally, ATP-dependent serine protease that mediates the selective degradation of mutant and abnormal proteins as well as certain short-lived regulatory proteins. Required for cellular homeostasis and for survival from DNA damage and developmental changes induced by stress. Degrades polypeptides processively to yield small peptide fragments that are 5 to 10 amino acids long. Binds to DNA in a double-stranded, site-specific manner. This Rickettsia felis (strain ATCC VR-1525 / URRWXCal2) (Rickettsia azadi) protein is Lon protease.